The sequence spans 281 residues: Pantothenate synthetase (281 aa).

30-37 serves as a coordination point for ATP; sequence MGNLHQGH. His37 (proton donor) is an active-site residue. Gln61 lines the (R)-pantoate pocket. Gln61 provides a ligand contact to beta-alanine. 149–152 serves as a coordination point for ATP; that stretch reads GNKD. Gln155 is a binding site for (R)-pantoate. ATP-binding positions include Ile178 and 186 to 189; that span reads MSSR.

It belongs to the pantothenate synthetase family. As to quaternary structure, homodimer.

The protein resides in the cytoplasm. It catalyses the reaction (R)-pantoate + beta-alanine + ATP = (R)-pantothenate + AMP + diphosphate + H(+). Its pathway is cofactor biosynthesis; (R)-pantothenate biosynthesis; (R)-pantothenate from (R)-pantoate and beta-alanine: step 1/1. Its function is as follows. Catalyzes the condensation of pantoate with beta-alanine in an ATP-dependent reaction via a pantoyl-adenylate intermediate. This is Pantothenate synthetase from Shewanella sp. (strain MR-7).